We begin with the raw amino-acid sequence, 282 residues long: Pantothenate synthetase (282 aa).

Residue 26 to 33 (MGNLHDGH) coordinates ATP. The active-site Proton donor is H33. Q57 is a (R)-pantoate binding site. Position 57 (Q57) interacts with beta-alanine. An ATP-binding site is contributed by 148-151 (GKKD). A (R)-pantoate-binding site is contributed by Q154. 185–188 (LSSR) provides a ligand contact to ATP.

This sequence belongs to the pantothenate synthetase family. As to quaternary structure, homodimer.

It localises to the cytoplasm. The enzyme catalyses (R)-pantoate + beta-alanine + ATP = (R)-pantothenate + AMP + diphosphate + H(+). It participates in cofactor biosynthesis; (R)-pantothenate biosynthesis; (R)-pantothenate from (R)-pantoate and beta-alanine: step 1/1. Functionally, catalyzes the condensation of pantoate with beta-alanine in an ATP-dependent reaction via a pantoyl-adenylate intermediate. The polypeptide is Pantothenate synthetase (Polaromonas sp. (strain JS666 / ATCC BAA-500)).